The chain runs to 506 residues: Histidine ammonia-lyase (506 aa).

The segment at residues 142–144 (ASG) is a cross-link (5-imidazolinone (Ala-Gly)). Ser143 is subject to 2,3-didehydroalanine (Ser).

This sequence belongs to the PAL/histidase family. In terms of processing, contains an active site 4-methylidene-imidazol-5-one (MIO), which is formed autocatalytically by cyclization and dehydration of residues Ala-Ser-Gly.

The protein localises to the cytoplasm. It catalyses the reaction L-histidine = trans-urocanate + NH4(+). Its pathway is amino-acid degradation; L-histidine degradation into L-glutamate; N-formimidoyl-L-glutamate from L-histidine: step 1/3. In Bacillus cereus (strain B4264), this protein is Histidine ammonia-lyase.